The following is a 399-amino-acid chain: Acetate kinase (399 aa).

Mg(2+) is bound at residue asparagine 7. Residue lysine 14 coordinates ATP. Arginine 90 contacts substrate. The active-site Proton donor/acceptor is aspartate 147. ATP is bound by residues 207 to 211 (HLGNG), 282 to 284 (DFR), and 330 to 334 (GIGEN). Glutamate 385 contributes to the Mg(2+) binding site.

Belongs to the acetokinase family. As to quaternary structure, homodimer. It depends on Mg(2+) as a cofactor. The cofactor is Mn(2+).

The protein resides in the cytoplasm. The catalysed reaction is acetate + ATP = acetyl phosphate + ADP. It functions in the pathway metabolic intermediate biosynthesis; acetyl-CoA biosynthesis; acetyl-CoA from acetate: step 1/2. Its function is as follows. Catalyzes the formation of acetyl phosphate from acetate and ATP. Can also catalyze the reverse reaction. This chain is Acetate kinase, found in Caldicellulosiruptor bescii (strain ATCC BAA-1888 / DSM 6725 / KCTC 15123 / Z-1320) (Anaerocellum thermophilum).